We begin with the raw amino-acid sequence, 234 residues long: Sugar fermentation stimulation protein homolog (234 aa).

Belongs to the SfsA family.

The sequence is that of Sugar fermentation stimulation protein homolog from Idiomarina loihiensis (strain ATCC BAA-735 / DSM 15497 / L2-TR).